A 310-amino-acid chain; its full sequence is tRNA dimethylallyltransferase (310 aa).

Residue 13–20 participates in ATP binding; the sequence is GPTASGKT. 15 to 20 contacts substrate; sequence TASGKT. Interaction with substrate tRNA stretches follow at residues 38–41, 162–166, 243–248, and 276–283; these read DSAL, QRLSR, RCVGYR, and KRQITWLR.

Belongs to the IPP transferase family. Monomer. It depends on Mg(2+) as a cofactor.

The catalysed reaction is adenosine(37) in tRNA + dimethylallyl diphosphate = N(6)-dimethylallyladenosine(37) in tRNA + diphosphate. Catalyzes the transfer of a dimethylallyl group onto the adenine at position 37 in tRNAs that read codons beginning with uridine, leading to the formation of N6-(dimethylallyl)adenosine (i(6)A). The polypeptide is tRNA dimethylallyltransferase (Vibrio campbellii (strain ATCC BAA-1116)).